Reading from the N-terminus, the 491-residue chain is Aspartyl/glutamyl-tRNA(Asn/Gln) amidotransferase subunit B (491 aa).

Belongs to the GatB/GatE family. GatB subfamily. Heterotrimer of A, B and C subunits.

The enzyme catalyses L-glutamyl-tRNA(Gln) + L-glutamine + ATP + H2O = L-glutaminyl-tRNA(Gln) + L-glutamate + ADP + phosphate + H(+). The catalysed reaction is L-aspartyl-tRNA(Asn) + L-glutamine + ATP + H2O = L-asparaginyl-tRNA(Asn) + L-glutamate + ADP + phosphate + 2 H(+). In terms of biological role, allows the formation of correctly charged Asn-tRNA(Asn) or Gln-tRNA(Gln) through the transamidation of misacylated Asp-tRNA(Asn) or Glu-tRNA(Gln) in organisms which lack either or both of asparaginyl-tRNA or glutaminyl-tRNA synthetases. The reaction takes place in the presence of glutamine and ATP through an activated phospho-Asp-tRNA(Asn) or phospho-Glu-tRNA(Gln). The sequence is that of Aspartyl/glutamyl-tRNA(Asn/Gln) amidotransferase subunit B from Burkholderia cenocepacia (strain HI2424).